The primary structure comprises 254 residues: Triosephosphate isomerase (254 aa).

Residue 10–12 coordinates substrate; sequence NWK. The Electrophile role is filled by histidine 99. Glutamate 169 acts as the Proton acceptor in catalysis. Residues glycine 175, serine 215, and 236–237 each bind substrate; that span reads GG.

The protein belongs to the triosephosphate isomerase family. Homodimer.

It localises to the cytoplasm. It carries out the reaction D-glyceraldehyde 3-phosphate = dihydroxyacetone phosphate. The protein operates within carbohydrate biosynthesis; gluconeogenesis. It participates in carbohydrate degradation; glycolysis; D-glyceraldehyde 3-phosphate from glycerone phosphate: step 1/1. Its function is as follows. Involved in the gluconeogenesis. Catalyzes stereospecifically the conversion of dihydroxyacetone phosphate (DHAP) to D-glyceraldehyde-3-phosphate (G3P). The protein is Triosephosphate isomerase of Chlamydia caviae (strain ATCC VR-813 / DSM 19441 / 03DC25 / GPIC) (Chlamydophila caviae).